The chain runs to 326 residues: Cobalamin biosynthesis protein CobD (326 aa).

The next 4 membrane-spanning stretches (helical) occupy residues 58–78 (MRGVATILILLAASILLGVVL), 81–101 (LFDVLGAVGFILEAITVAVFL), 157–177 (FSDGVVAPALWYAVAGLPGLL), and 304–324 (VFYRACTTLAAASAVLVLPFL).

Belongs to the CobD/CbiB family.

Its subcellular location is the cell membrane. Its pathway is cofactor biosynthesis; adenosylcobalamin biosynthesis. Its function is as follows. Converts cobyric acid to cobinamide by the addition of aminopropanol on the F carboxylic group. This Sinorhizobium fredii (strain NBRC 101917 / NGR234) protein is Cobalamin biosynthesis protein CobD.